Reading from the N-terminus, the 367-residue chain is N-acetylmuramoyl-L-alanine amidase BlyA (367 aa).

The N-acetylmuramoyl-L-alanine amidase domain maps to 24–158 (VKKCVLHYTA…DITHKNCPAP (135 aa)). Positions 178–204 (SGKSVSKASPTKPTTSSPSSSSAVSGS) are disordered. The span at 180–204 (KSVSKASPTKPTTSSPSSSSAVSGS) shows a compositional bias: low complexity. SH3b domains are found at residues 202–271 (SGSL…YVDV) and 298–367 (GKIK…GSTI).

It belongs to the N-acetylmuramoyl-L-alanine amidase 2 family.

It is found in the secreted. The enzyme catalyses Hydrolyzes the link between N-acetylmuramoyl residues and L-amino acid residues in certain cell-wall glycopeptides.. In terms of biological role, autolysins are involved in some important biological processes such as cell separation, cell-wall turnover, competence for genetic transformation, formation of the flagella and sporulation. Involved in prophage SP-beta-mediated cell lysis. The sequence is that of N-acetylmuramoyl-L-alanine amidase BlyA (blyA) from Bacillus subtilis (strain 168).